Consider the following 144-residue polypeptide: Large ribosomal subunit protein uL14 (144 aa).

The tract at residues 107–144 (NEGYTHSQHSNQREGGERIQAQPSPPHARRAVKTSFCR) is disordered.

The protein belongs to the universal ribosomal protein uL14 family. In terms of assembly, part of the 50S ribosomal subunit. Forms a cluster with proteins L3 and L19. In the 70S ribosome, L14 and L19 interact and together make contacts with the 16S rRNA in bridges B5 and B8.

In terms of biological role, binds to 23S rRNA. Forms part of two intersubunit bridges in the 70S ribosome. The sequence is that of Large ribosomal subunit protein uL14 from Xanthobacter autotrophicus (strain ATCC BAA-1158 / Py2).